Reading from the N-terminus, the 237-residue chain is N-(5'-phosphoribosyl)anthranilate isomerase (237 aa).

It belongs to the TrpF family.

The catalysed reaction is N-(5-phospho-beta-D-ribosyl)anthranilate = 1-(2-carboxyphenylamino)-1-deoxy-D-ribulose 5-phosphate. Its pathway is amino-acid biosynthesis; L-tryptophan biosynthesis; L-tryptophan from chorismate: step 3/5. This Desulfitobacterium hafniense (strain DSM 10664 / DCB-2) protein is N-(5'-phosphoribosyl)anthranilate isomerase.